Consider the following 144-residue polypeptide: Large ribosomal subunit protein uL15 (144 aa).

The segment at 1–54 (MHLNTLKPAEGAKKLAKRKGRGQGSGNGKMAGRGHKGQKSRSGGMPKIGFEGGQ) is disordered. The span at 22–31 (GQGSGNGKMA) shows a compositional bias: gly residues.

This sequence belongs to the universal ribosomal protein uL15 family. As to quaternary structure, part of the 50S ribosomal subunit.

Functionally, binds to the 23S rRNA. In Hydrogenovibrio crunogenus (strain DSM 25203 / XCL-2) (Thiomicrospira crunogena), this protein is Large ribosomal subunit protein uL15.